Reading from the N-terminus, the 272-residue chain is Transcription factor GAL1 (272 aa).

The span at methionine 1 to leucine 10 shows a compositional bias: polar residues. Disordered regions lie at residues methionine 1–threonine 49, tyrosine 102–isoleucine 215, and lysine 246–tyrosine 272. Acidic residues-rich tracts occupy residues glutamate 113–glutamine 122 and serine 152–glutamate 174. The segment covering leucine 175–isoleucine 215 has biased composition (basic and acidic residues). The segment at cysteine 240–aspartate 255 adopts a CCHC-type zinc-finger fold.

It is found in the nucleus. Its function is as follows. Transcription factor; part of the gene cluster that mediates the biosynthesis of liamocins, glycolipids (also called heavy oils) composed of a single mannitol or arabitol headgroup linked to either three, four or even six 3,5-dihydroxydecanoic ester tail-groups. Positively regulates the expression of PKS1 and EST1 that mediate the biosynthesis of liamocins. The protein is Transcription factor GAL1 of Aureobasidium melanogenum (Aureobasidium pullulans var. melanogenum).